The chain runs to 368 residues: Aminomethyltransferase (368 aa).

The protein belongs to the GcvT family. The glycine cleavage system is composed of four proteins: P, T, L and H.

The catalysed reaction is N(6)-[(R)-S(8)-aminomethyldihydrolipoyl]-L-lysyl-[protein] + (6S)-5,6,7,8-tetrahydrofolate = N(6)-[(R)-dihydrolipoyl]-L-lysyl-[protein] + (6R)-5,10-methylene-5,6,7,8-tetrahydrofolate + NH4(+). Its function is as follows. The glycine cleavage system catalyzes the degradation of glycine. This Thermoanaerobacter pseudethanolicus (strain ATCC 33223 / 39E) (Clostridium thermohydrosulfuricum) protein is Aminomethyltransferase.